Consider the following 214-residue polypeptide: Large ribosomal subunit protein uL1 (214 aa).

This sequence belongs to the universal ribosomal protein uL1 family. In terms of assembly, part of the 50S ribosomal subunit.

Its function is as follows. Binds directly to 23S rRNA. Probably involved in E site tRNA release. Functionally, protein L1 is also a translational repressor protein, it controls the translation of its operon by binding to its mRNA. The chain is Large ribosomal subunit protein uL1 from Methanoregula boonei (strain DSM 21154 / JCM 14090 / 6A8).